Reading from the N-terminus, the 119-residue chain is MITKQDKNQVRKKRHARVRSKISGTAERPRLNVFRSNKNIYAQLIDDVAGVTIVSASSQENGFEGAGSNVEAASKIGETIAKRAAEKNITAVVFDRGGYLYHGRVKALAEAARENGLEF.

The disordered stretch occupies residues M1–G24. Residues V10 to S20 show a composition bias toward basic residues.

The protein belongs to the universal ribosomal protein uL18 family. Part of the 50S ribosomal subunit; part of the 5S rRNA/L5/L18/L25 subcomplex. Contacts the 5S and 23S rRNAs.

Functionally, this is one of the proteins that bind and probably mediate the attachment of the 5S RNA into the large ribosomal subunit, where it forms part of the central protuberance. This is Large ribosomal subunit protein uL18 from Lysinibacillus sphaericus (strain C3-41).